A 215-amino-acid polypeptide reads, in one-letter code: 3-demethoxyubiquinol 3-hydroxylase (215 aa).

Fe cation contacts are provided by glutamate 64, glutamate 94, histidine 97, glutamate 146, glutamate 178, and histidine 181.

It belongs to the COQ7 family. Requires Fe cation as cofactor.

It is found in the cell membrane. It carries out the reaction a 5-methoxy-2-methyl-3-(all-trans-polyprenyl)benzene-1,4-diol + AH2 + O2 = a 3-demethylubiquinol + A + H2O. Its pathway is cofactor biosynthesis; ubiquinone biosynthesis. In terms of biological role, catalyzes the hydroxylation of 2-nonaprenyl-3-methyl-6-methoxy-1,4-benzoquinol during ubiquinone biosynthesis. The protein is 3-demethoxyubiquinol 3-hydroxylase of Pseudomonas fluorescens (strain SBW25).